The sequence spans 337 residues: Cytoskeleton protein RodZ (337 aa).

Topologically, residues 1-111 are cytoplasmic; sequence MNTEATHDQN…LGKRRKKRDG (111 aa). Residues 19 to 71 enclose the HTH cro/C1-type domain; it reads LRNAREQLGLSQQAVAERLCLKVSTVRDIEEDKAPADLASTFLRGYIRSYARL. Positions 30–49 form a DNA-binding region, H-T-H motif; the sequence is QQAVAERLCLKVSTVRDIEE. Residues 112–132 form a helical; Signal-anchor for type II membrane protein membrane-spanning segment; that stretch reads WLMTFTWLVLFVVVGLTGAWW. Topologically, residues 133-337 are periplasmic; the sequence is WQNHKAQQEE…TLNAEQSPAQ (205 aa). The tract at residues 155–220 is disordered; sequence NAGGDSAQSV…QNAVVAPSQA (66 aa). Positions 160–192 are enriched in polar residues; it reads SAQSVPLDTSEAASQDSTPAPTAPVDSTATNAV. Low complexity predominate over residues 193-217; the sequence is PQTPDASATTTAPAADAQQNAVVAP.

The protein belongs to the RodZ family.

It localises to the cell inner membrane. Cytoskeletal protein that is involved in cell-shape control through regulation of the length of the long axis. This chain is Cytoskeleton protein RodZ, found in Citrobacter koseri (strain ATCC BAA-895 / CDC 4225-83 / SGSC4696).